The sequence spans 292 residues: Bifunctional protein FolD (292 aa).

NADP(+)-binding positions include 165 to 167 (GRS), S190, and T231.

Belongs to the tetrahydrofolate dehydrogenase/cyclohydrolase family. As to quaternary structure, homodimer.

It catalyses the reaction (6R)-5,10-methylene-5,6,7,8-tetrahydrofolate + NADP(+) = (6R)-5,10-methenyltetrahydrofolate + NADPH. It carries out the reaction (6R)-5,10-methenyltetrahydrofolate + H2O = (6R)-10-formyltetrahydrofolate + H(+). It functions in the pathway one-carbon metabolism; tetrahydrofolate interconversion. In terms of biological role, catalyzes the oxidation of 5,10-methylenetetrahydrofolate to 5,10-methenyltetrahydrofolate and then the hydrolysis of 5,10-methenyltetrahydrofolate to 10-formyltetrahydrofolate. This Arthrobacter globiformis protein is Bifunctional protein FolD.